Reading from the N-terminus, the 206-residue chain is uncharacterized protein (206 aa).

The protein localises to the plastid. Its subcellular location is the cyanelle. This is an uncharacterized protein from Cyanophora paradoxa.